Consider the following 955-residue polypeptide: Protein translocase subunit SecA (955 aa).

ATP-binding positions include Gln87, 105–109 (GEGKT), and Asp494. The interval 861–955 (ASPAPAAPRP…KKAPRTKRKR (95 aa)) is disordered. Positions 874-888 (QEAAQQAQGTAAPSA) are enriched in low complexity. Over residues 943–955 (SKGKKAPRTKRKR) the composition is skewed to basic residues.

Belongs to the SecA family. As to quaternary structure, monomer and homodimer. Part of the essential Sec protein translocation apparatus which comprises SecA, SecYEG and auxiliary proteins SecDF. Other proteins may also be involved.

Its subcellular location is the cell membrane. The protein resides in the cytoplasm. The catalysed reaction is ATP + H2O + cellular proteinSide 1 = ADP + phosphate + cellular proteinSide 2.. In terms of biological role, part of the Sec protein translocase complex. Interacts with the SecYEG preprotein conducting channel. Has a central role in coupling the hydrolysis of ATP to the transfer of proteins into and across the cell membrane, serving as an ATP-driven molecular motor driving the stepwise translocation of polypeptide chains across the membrane. This chain is Protein translocase subunit SecA, found in Rhodococcus jostii (strain RHA1).